The primary structure comprises 463 residues: Glycine--tRNA ligase (463 aa).

R102 lines the substrate pocket. Residues 113 to 134 form a disordered region; that stretch reads KHGHPPPNGLADIRDPDTGEPG. Position 165 (E165) interacts with substrate. ATP-binding positions include 197–199, 207–212, 284–285, and 328–331; these read RNE, FRTREF, EL, and GLTR. Residue 212-216 participates in substrate binding; the sequence is FEQME. Substrate is bound at residue 324 to 328; the sequence is EPAAG.

Belongs to the class-II aminoacyl-tRNA synthetase family. In terms of assembly, homodimer.

It localises to the cytoplasm. It catalyses the reaction tRNA(Gly) + glycine + ATP = glycyl-tRNA(Gly) + AMP + diphosphate. Its function is as follows. Catalyzes the attachment of glycine to tRNA(Gly). This is Glycine--tRNA ligase from Mycolicibacterium paratuberculosis (strain ATCC BAA-968 / K-10) (Mycobacterium paratuberculosis).